A 383-amino-acid polypeptide reads, in one-letter code: Protein delta homolog 2 (383 aa).

The N-terminal stretch at M1 to G26 is a signal peptide. 4 EGF-like domains span residues N27–E58, R62–D89, D91–E129, and K131–E172. The Extracellular segment spans residues N27–S306. Cystine bridges form between C29–C40, C33–C46, C48–C57, C66–C71, C79–C88, C95–C107, C101–C117, C119–C128, C135–C148, C142–C160, C162–C171, C178–C189, C183–C198, C200–C209, C216–C227, C221–C236, and C238–C247. N157 carries an N-linked (GlcNAc...) asparagine glycan. The EGF-like 5; calcium-binding domain maps to N174–T210. Residues N212 to E248 enclose the EGF-like 6; calcium-binding domain. A helical transmembrane segment spans residues L307–L327. Topologically, residues T328 to L383 are cytoplasmic. Residues P364 to L383 are disordered. The segment covering L367 to P377 has biased composition (pro residues).

It is found in the membrane. Its function is as follows. Regulates adipogenesis. The chain is Protein delta homolog 2 (DLK2) from Bos taurus (Bovine).